Consider the following 162-residue polypeptide: UPF0763 protein Sdel_0383 (162 aa).

This sequence belongs to the UPF0763 family.

In Sulfurospirillum deleyianum (strain ATCC 51133 / DSM 6946 / 5175), this protein is UPF0763 protein Sdel_0383.